We begin with the raw amino-acid sequence, 111 residues long: MICOS complex subunit MIC13 (111 aa).

The helical transmembrane segment at 8–26 (VVKFATKVTIAGGALYVAY) threads the bilayer.

The protein belongs to the MICOS complex subunit Mic13 family. Component of the mitochondrial contact site and cristae organizing system (MICOS) complex.

It is found in the mitochondrion inner membrane. In terms of biological role, component of the MICOS complex, a large protein complex of the mitochondrial inner membrane that plays crucial roles in the maintenance of crista junctions, inner membrane architecture, and formation of contact sites to the outer membrane. Constituent of mature MICOS complex, it is required for the formation of cristae junction (CJ) and maintenance of cristae morphology. Required for the incorporation of MIC10 into the MICOS complex. In Danio rerio (Zebrafish), this protein is MICOS complex subunit MIC13.